A 33-amino-acid polypeptide reads, in one-letter code: Neutrophil defensin 1 (33 aa).

Disulfide bonds link cysteine 3–cysteine 31, cysteine 5–cysteine 20, and cysteine 10–cysteine 30.

It belongs to the alpha-defensin family.

It localises to the secreted. Its function is as follows. Anti-fungal and bactericidal activity, greater against Gram-positive bacteria. The chain is Neutrophil defensin 1 from Mesocricetus auratus (Golden hamster).